We begin with the raw amino-acid sequence, 599 residues long: Cytochrome P450 monooxygenase ALT8 (599 aa).

The next 2 helical transmembrane spans lie at Leu-4–Gly-21 and Ile-36–Phe-56. N-linked (GlcNAc...) asparagine glycosylation is present at Asn-127. Low complexity predominate over residues Asp-495–Phe-504. The tract at residues Asp-495–Ser-522 is disordered. Cys-539 serves as a coordination point for heme.

The protein belongs to the cytochrome P450 family. Requires heme as cofactor.

Its subcellular location is the membrane. It functions in the pathway secondary metabolite biosynthesis. Cytochrome P450 monooxygenase; part of the gene cluster that mediates the biosynthesis of the host-selective toxins (HSTs) AAL-toxins, sphinganine-analog mycotoxins responsible for Alternaria stem canker on tomato by the tomato pathotype. The biosynthesis starts with the polyketide synthase ALT1-catalyzed C-16 carbon chain assembly from one starter acetyl-CoA unit with malonyl-CoA extender units. ALT1 also selectively transfers methyl groups at the first and the third cycle of chain elongation for AAL toxin. The C-16 polyketide chain is released from the enzyme by a nucleophilic attack of a carbanion, which is derived from R-carbon of glycin by decarboxylation, on the carbonyl carbon of polyketide acyl chain. This step is probably catalyzed by a pyridoxal 5'-phosphate-dependent aminoacyl transferase ALT4. The respective functions of the other enzymes encoded by the cluster have still to be elucidated. The sphingosine N-acyltransferase-like protein ALT7 seems not to act as a resistance/self-tolerance factor against the toxin in the toxin biosynthetic gene cluster, contrary to what is expected. The chain is Cytochrome P450 monooxygenase ALT8 from Alternaria alternata (Alternaria rot fungus).